Here is a 466-residue protein sequence, read N- to C-terminus: Argininosuccinate lyase (466 aa).

The protein belongs to the lyase 1 family. Argininosuccinate lyase subfamily.

The protein resides in the cytoplasm. The catalysed reaction is 2-(N(omega)-L-arginino)succinate = fumarate + L-arginine. Its pathway is amino-acid biosynthesis; L-arginine biosynthesis; L-arginine from L-ornithine and carbamoyl phosphate: step 3/3. The chain is Argininosuccinate lyase from Ehrlichia ruminantium (strain Gardel).